A 543-amino-acid chain; its full sequence is Probable protein kinase UbiB (543 aa).

In terms of domain architecture, Protein kinase spans 123–501; that stretch reads DFDQQALASA…RVRQGQSRYL (379 aa). Residues 129–137 and Lys152 each bind ATP; that span reads LASASIAQV. Asp287 serves as the catalytic Proton acceptor. A run of 2 helical transmembrane segments spans residues 498–518 and 519–539; these read SRYL…LLSG and DVEV…VIGW.

It belongs to the ABC1 family. UbiB subfamily.

It localises to the cell inner membrane. The protein operates within cofactor biosynthesis; ubiquinone biosynthesis [regulation]. Functionally, is probably a protein kinase regulator of UbiI activity which is involved in aerobic coenzyme Q (ubiquinone) biosynthesis. This chain is Probable protein kinase UbiB, found in Serratia proteamaculans (strain 568).